The chain runs to 136 residues: Biopolymer transport protein exbD2 (136 aa).

The Cytoplasmic portion of the chain corresponds to 1-23 (MAFSTGGNRGPMADINVTPLVDV). A helical membrane pass occupies residues 24–44 (MLVLLIIFIVTAPIMTYPIAV). Residues 45-136 (DLPQRVLNPP…SQMKKIGFMQ (92 aa)) are Periplasmic-facing.

Belongs to the ExbD/TolR family. As to quaternary structure, the accessory proteins ExbB and ExbD seem to form a complex with TonB.

Its subcellular location is the cell inner membrane. Functionally, involved in the TonB-dependent energy-dependent transport of various receptor-bound substrates. In Xanthomonas campestris pv. campestris (strain ATCC 33913 / DSM 3586 / NCPPB 528 / LMG 568 / P 25), this protein is Biopolymer transport protein exbD2 (exbD2).